The primary structure comprises 331 residues: Low affinity immunoglobulin epsilon Fc receptor (331 aa).

The Cytoplasmic portion of the chain corresponds to 1 to 23 (MEENEYSGYWEPPRKRCCCARRG). 2 S-palmitoyl cysteine lipidation sites follow: Cys-17 and Cys-18. A helical; Signal-anchor for type II membrane protein membrane pass occupies residues 24–49 (TQLMLVGLLSTAMWAGLLALLLLWHW). The Extracellular portion of the chain corresponds to 50 to 331 (ETEKNLKQLG…PTRPTPKSEP (282 aa)). Asn-65 is a glycosylation site (N-linked (GlcNAc...) asparagine). Repeats lie at residues 71–91 (KDLQKFQSNQLAQKSQVVQMS), 92–112 (QNLQELQAEQKQMKAQDSRLS), and 113–133 (QNLTGLQEDLRNAQSQNSKLS). N-linked (GlcNAc...) asparagine glycosylation occurs at Asn-114. Disulfide bonds link Cys-183–Cys-311, Cys-186–Cys-197, Cys-214–Cys-305, and Cys-282–Cys-296. Residues 185 to 298 (ICPKNWLHFQ…GQWNDAFCRS (114 aa)) enclose the C-type lectin domain. Glu-272, Asn-292, and Asp-293 together coordinate Ca(2+). O-linked (Xyl...) (chondroitin sulfate) serine glycosylation is present at Ser-319.

Homotrimer. Interacts (via C-type lectin domain) with IGHE (via CH3 region); this interaction regulates IgE homeostasis. Interacts (via C-terminus) with CR2/CD21 (via Sushi domain 1 and 2). Post-translationally, N- and O-glycosylated.

Its subcellular location is the cell membrane. It localises to the secreted. Functionally, low-affinity receptor for immunoglobulin E (IgE) and CR2/CD21. Has essential roles in the regulation of IgE production and in the differentiation of B cells. On B cells, initiates IgE-dependent antigen uptake and presentation to T cells. On macrophages, upon IgE binding and antigen cross-linking induces intracellular killing of parasites through activation of L-Arginine-nitric oxide pathway. The polypeptide is Low affinity immunoglobulin epsilon Fc receptor (Fcer2) (Mus musculus (Mouse)).